The following is a 315-amino-acid chain: Probable cell division protein WhiA (315 aa).

A DNA-binding region (H-T-H motif) is located at residues 275–309 (TLKELGEMVSSGTVSKSGVNHRLRKIDEIADALRR).

Belongs to the WhiA family.

In terms of biological role, involved in cell division and chromosome segregation. This Lysinibacillus sphaericus (strain C3-41) protein is Probable cell division protein WhiA.